A 223-amino-acid chain; its full sequence is Endonuclease V (223 aa).

Asp-35 and Asp-103 together coordinate Mg(2+).

It belongs to the endonuclease V family. The cofactor is Mg(2+).

It localises to the cytoplasm. The enzyme catalyses Endonucleolytic cleavage at apurinic or apyrimidinic sites to products with a 5'-phosphate.. In terms of biological role, DNA repair enzyme involved in the repair of deaminated bases. Selectively cleaves double-stranded DNA at the second phosphodiester bond 3' to a deoxyinosine leaving behind the intact lesion on the nicked DNA. This Klebsiella pneumoniae subsp. pneumoniae (strain ATCC 700721 / MGH 78578) protein is Endonuclease V.